Here is a 524-residue protein sequence, read N- to C-terminus: Ribonuclease Y (524 aa).

A helical membrane pass occupies residues 7 to 27; the sequence is LGGLLTGIVIAIIASIIASVI. In terms of domain architecture, KH spans 214–299; that stretch reads TVSVVPLPND…EMVEKARKEV (86 aa). One can recognise an HD domain in the interval 340–433; that stretch reads VLSHSIEVAR…VQAADSISAA (94 aa).

Belongs to the RNase Y family.

It is found in the cell membrane. Its function is as follows. Endoribonuclease that initiates mRNA decay. This is Ribonuclease Y from Acetivibrio thermocellus (strain ATCC 27405 / DSM 1237 / JCM 9322 / NBRC 103400 / NCIMB 10682 / NRRL B-4536 / VPI 7372) (Clostridium thermocellum).